Here is a 253-residue protein sequence, read N- to C-terminus: Sporulated oocyst TA4 antigen (253 aa).

Residues 1-23 (MARLSFVSLLSLSLLFGQQAVRA) form the signal peptide. Positions 182-184 (RRL) are cleaved as a propeptide — removed in mature form.

The TA4 antigen is composed of a 17 kDa and a 8 kDa chain, linked by a disulfide bond.

This Eimeria tenella (Coccidian parasite) protein is Sporulated oocyst TA4 antigen.